We begin with the raw amino-acid sequence, 81 residues long: Protein RALF-like 7 (81 aa).

Positions 1–29 (MSARKKNRIHVFFVSIMIIISLVSGFGEG) are cleaved as a signal peptide. Cystine bridges form between Cys-46/Cys-54 and Cys-66/Cys-72.

It belongs to the plant rapid alkalinization factor (RALF) family.

It is found in the secreted. In terms of biological role, cell signaling peptide that may regulate plant stress, growth, and development. Mediates a rapid alkalinization of extracellular space by mediating a transient increase in the cytoplasmic Ca(2+) concentration leading to a calcium-dependent signaling events through a cell surface receptor and a concomitant activation of some intracellular mitogen-activated protein kinases. This is Protein RALF-like 7 (RALFL7) from Arabidopsis thaliana (Mouse-ear cress).